A 357-amino-acid polypeptide reads, in one-letter code: 3-dehydroquinate synthase (357 aa).

NAD(+) contacts are provided by residues 69 to 74, 103 to 107, 127 to 128, Lys140, and Lys149; these read DGEKNK, GVIGD, and TT. Residues Glu182, His245, and His262 each contribute to the Zn(2+) site.

It belongs to the sugar phosphate cyclases superfamily. Dehydroquinate synthase family. The cofactor is Co(2+). It depends on Zn(2+) as a cofactor. NAD(+) serves as cofactor.

It localises to the cytoplasm. It carries out the reaction 7-phospho-2-dehydro-3-deoxy-D-arabino-heptonate = 3-dehydroquinate + phosphate. It functions in the pathway metabolic intermediate biosynthesis; chorismate biosynthesis; chorismate from D-erythrose 4-phosphate and phosphoenolpyruvate: step 2/7. Its function is as follows. Catalyzes the conversion of 3-deoxy-D-arabino-heptulosonate 7-phosphate (DAHP) to dehydroquinate (DHQ). This Shewanella denitrificans (strain OS217 / ATCC BAA-1090 / DSM 15013) protein is 3-dehydroquinate synthase.